Consider the following 503-residue polypeptide: Sodium/hydrogen exchanger 3 (503 aa).

The Cytoplasmic portion of the chain corresponds to 1–22 (MVIGLSTMLEKTEALFASDHAS). The chain crosses the membrane as a helical span at residues 23 to 43 (VVSMNLFVALLCACIVLGHLL). The Vacuolar portion of the chain corresponds to 44 to 51 (EETRWMNE). Residue Asn50 is glycosylated (N-linked (GlcNAc...) asparagine). Residues 52-72 (SITALIIGSCTGIVILLISGG) form a helical membrane-spanning segment. The Cytoplasmic portion of the chain corresponds to 73–76 (KSSR). Positions 77–97 (ILVFSEDLFFIYLLPPIIFNA) form an intramembrane region, helical. The Cytoplasmic segment spans residues 98 to 109 (GFQVKKKQFFRN). The helical transmembrane segment at 110–130 (FMTIMLFGAIGTLISFVIISF) threads the bilayer. The Vacuolar segment spans residues 131 to 138 (GAKHLFEK). The chain crosses the membrane as a helical span at residues 139-159 (MNIGDLTIADYLAIGAIFSAT). Residues 160–174 (DSVCTLQVLNQDETP) are Cytoplasmic-facing. Residues 175 to 195 (LLYSLVFGEGVVNDATSVVLF) traverse the membrane as a helical segment. Topologically, residues 196–219 (NAIQRFDLTNINSAIALEFAGNFF) are vacuolar. Residues 220-240 (YLFILSTALGVAAGLLSAFVI) form a helical membrane-spanning segment. At 241–265 (KKLYIGRHSTDREVALMMLLAYLSY) the chain is on the cytoplasmic side. The helical transmembrane segment at 266–286 (MLAELFHLSSILTVFFCGIVM) threads the bilayer. At 287–305 (SHYTWHNVTDKSKVTTKHT) the chain is on the vacuolar side. The N-linked (GlcNAc...) asparagine glycan is linked to Asn293. Residues 306-326 (FAAMSFLAEIFIFLYVGMDAL) traverse the membrane as a helical segment. Over 327–345 (DIEKWDVVRNSPGQSIGVS) the chain is Cytoplasmic. The chain crosses the membrane as a helical span at residues 346-366 (SILLGLILLGRAAFVFPLSFL). Over 367-383 (SNLTKSSPDEKIDLKKQ) the chain is Vacuolar. An N-linked (GlcNAc...) asparagine glycan is attached at Asn368. Residues 384–406 (VTIWWAGLMRGAVSMALAYNQFT) form a helical membrane-spanning segment. Over 407–416 (TSGHTKVLGN) the chain is Cytoplasmic. Residues 417–437 (AIMITSTITVVLFSTVVFGLL) form a helical membrane-spanning segment. Over 438 to 503 (TKPLVKHLQP…FWKSPSRFTH (66 aa)) the chain is Vacuolar.

The protein belongs to the monovalent cation:proton antiporter 1 (CPA1) transporter (TC 2.A.36) family. Expressed in roots.

It localises to the vacuole membrane. The catalysed reaction is Na(+)(in) + H(+)(out) = Na(+)(out) + H(+)(in). It carries out the reaction K(+)(in) + H(+)(out) = K(+)(out) + H(+)(in). Functionally, may act in low affinity electroneutral exchange of protons for cations such as Na(+) or K(+) across membranes. May also exchange Li(+) and Cs(+) with a lower affinity. In Arabidopsis thaliana (Mouse-ear cress), this protein is Sodium/hydrogen exchanger 3 (NHX3).